The primary structure comprises 446 residues: MGREIITLQAGQCGNQIGSQFWQQLCLEHGIGPDGTLESFATEGVDRKDVFFYQSDDTRYIPRAILIDLEPRVVNNILSDTYGSLYNPENILITKNGGGAGNNWANGYSHAERIFEDIMDMIDREADGSDSLEGFSLLHSIAGGTGSGLGSFLLERLNDRYPKKIIQTYSVFPNSQSVSDVVVQPYNSLLALKRLTLNADSVVVLDNAALAHIAADRLHTQNPTFHQQNQLVSTVMSASTTTLRYPGYMNNDLVSIIASLIPSPRCHFLLTSYTPFTNQQVEEAKAIRKTTVLDVMRRLLLPKNQMVSVNPSKKSCFISILDIIQGEADPADVHKSLLRIRERRYASFIPWGPASIQVALSKKSPYIKTNHRVSGLMLANHTSIASLFKRTLDQYDRLRKRNAFLEQYKKEAIFEDDLNEFDSSRDVVADLINEYEACEDPNYLSL.

142–148 (AGGTGSG) is a GTP binding site.

It belongs to the tubulin family. Interacts with mto1. Interacts with mto2.

It localises to the cytoplasm. The protein resides in the cytoskeleton. The protein localises to the microtubule organizing center. It is found in the spindle pole body. In terms of biological role, tubulin is the major constituent of microtubules. The gamma chain is found at microtubule organizing centers (MTOC) such as the spindle poles or the centrosome, suggesting that it is involved in the minus-end nucleation of microtubule assembly. This is Tubulin gamma chain from Schizosaccharomyces pombe (strain 972 / ATCC 24843) (Fission yeast).